The primary structure comprises 991 residues: 5'-3' exoribonuclease 2 (991 aa).

Residues 264-268 carry the Nuclear localization signal motif; the sequence is TKKTK. Residues 404-418 show a composition bias toward basic and acidic residues; the sequence is RRNENYRRRQQRESN. Disordered stretches follow at residues 404-461, 547-582, and 872-991; these read RRNE…TQKI, SIESSTPVVHPIDTKVSNVGQKRKAPDSTEENENTD, and AERS…NGYY. Residues 433-452 are compositionally biased toward low complexity; it reads SVETQSTEVVTSSKSTSVDT. Low complexity-rich tracts occupy residues 878-889 and 896-910; these read SRRNNGNSYRGG and RRSYQSQSYSSRQSY. The span at 926-938 shows a compositional bias: polar residues; the sequence is WSGNGNFPRSNAS. The span at 946–958 shows a compositional bias: gly residues; the sequence is EGYGGRSRGGGYS. The segment covering 980 to 991 has biased composition (polar residues); the sequence is ESYNNNNRNGYY.

Belongs to the 5'-3' exonuclease family. XRN2/RAT1 subfamily. As to quaternary structure, interacts with din1/rai1; the interaction is direct, stabilizes dhp1 protein structure and may stimulate its exoribonuclease activity. The interaction also stimulates din1 pyrophosphohydrolase activity, probably by recruiting it to mRNA substrates.

The protein resides in the nucleus. Its function is as follows. Possesses 5'-&gt;3' exoribonuclease activity. Required for the processing of nuclear mRNA and rRNA precursors. May promote the termination of transcription by RNA polymerase II. Essential for vegetative cell growth and chromosome segregation. The polypeptide is 5'-3' exoribonuclease 2 (dhp1) (Schizosaccharomyces pombe (strain 972 / ATCC 24843) (Fission yeast)).